A 499-amino-acid polypeptide reads, in one-letter code: uncharacterized protein (499 aa).

FAD contacts are provided by residues glutamate 6–arginine 35 and tyrosine 272–aspartate 282.

The protein belongs to the PheA/TfdB FAD monooxygenase family. FAD serves as cofactor.

This is an uncharacterized protein from Bacillus subtilis (strain 168).